Consider the following 293-residue polypeptide: Ribosomal protein L11 methyltransferase (293 aa).

Positions 145, 166, 188, and 230 each coordinate S-adenosyl-L-methionine.

The protein belongs to the methyltransferase superfamily. PrmA family.

Its subcellular location is the cytoplasm. The enzyme catalyses L-lysyl-[protein] + 3 S-adenosyl-L-methionine = N(6),N(6),N(6)-trimethyl-L-lysyl-[protein] + 3 S-adenosyl-L-homocysteine + 3 H(+). In terms of biological role, methylates ribosomal protein L11. The protein is Ribosomal protein L11 methyltransferase of Klebsiella pneumoniae (strain 342).